The sequence spans 188 residues: Gamma-glutamylcyclotransferase (188 aa).

19–24 contacts substrate; sequence YFAYGS. Residue E98 is the Proton acceptor of the active site. Substrate is bound at residue Y139. S173 bears the Phosphoserine mark.

Belongs to the gamma-glutamylcyclotransferase family. Homodimer.

It catalyses the reaction an alpha-(gamma-L-glutamyl)-L-amino acid = 5-oxo-L-proline + an L-alpha-amino acid. Its function is as follows. Catalyzes the formation of 5-oxoproline from gamma-glutamyl dipeptides and may play a significant role in glutathione homeostasis. Induces release of cytochrome c from mitochondria with resultant induction of apoptosis. This is Gamma-glutamylcyclotransferase from Homo sapiens (Human).